We begin with the raw amino-acid sequence, 984 residues long: Probable serine/threonine-protein kinase ireA (984 aa).

The N-terminal stretch at 1–26 (MTFSKTRNKIIFLLFLIIINIFNINA) is a signal peptide. The Extracellular portion of the chain corresponds to 27–436 (YIKDENEDDL…NDLLDSNKLK (410 aa)). Disordered stretches follow at residues 70 to 91 (YSTS…EITK) and 137 to 157 (EDKS…DENK). Composition is skewed to low complexity over residues 82-91 (STSTSTEITK) and 141-150 (STSSTSTTSE). Residue Asn228 is glycosylated (N-linked (GlcNAc...) asparagine). The disordered stretch occupies residues 352 to 427 (SPPSNNNNNN…GANNNNNNNN (76 aa)). Residues 356–397 (NNNNNNNNNNNNNNNNNNNNNNNNNNNNNNNNNNKNNNNNNK) show a composition bias toward low complexity. The N-linked (GlcNAc...) asparagine glycan is linked to Asn398. A helical transmembrane segment spans residues 437-457 (NYDIYLYSSIVILITSIIVFI). Over 458–984 (RSKKNFNLIN…NDQYFVQYYY (527 aa)) the chain is Cytoplasmic. Residues 467–533 (NVNNNNNQNN…NDLIDEFIST (67 aa)) adopt a coiled-coil conformation. The segment covering 472-489 (NNQNNNQNSNQNNNINNK) has biased composition (low complexity). The segment at 472-518 (NNQNNNQNSNQNNNINNKKTPKKKKKKQKNKNNKNNNDEDDENEIEN) is disordered. Basic residues predominate over residues 490–503 (KTPKKKKKKQKNKN). Residues 509 to 518 (DEDDENEIEN) show a composition bias toward acidic residues. A Protein kinase domain is found at 575–851 (IITNKILGTG…IGECINHPFF (277 aa)). ATP is bound by residues 581–589 (LGTGSCGTI) and Lys603. Residues 667-676 (PTDSPSIQSS) are compositionally biased toward polar residues. The interval 667–692 (PTDSPSIQSSNNNGNGNNGNNNNNNQ) is disordered. A compositionally biased stretch (low complexity) spans 677-691 (NNNGNGNNGNNNNNN). The Proton acceptor role is filled by Asp722. The KEN domain occupies 854–984 (VHKKLSFLVA…NDQYFVQYYY (131 aa)).

Belongs to the protein kinase superfamily. Ser/Thr protein kinase family.

Its subcellular location is the membrane. The catalysed reaction is L-seryl-[protein] + ATP = O-phospho-L-seryl-[protein] + ADP + H(+). It catalyses the reaction L-threonyl-[protein] + ATP = O-phospho-L-threonyl-[protein] + ADP + H(+). The polypeptide is Probable serine/threonine-protein kinase ireA (ireA) (Dictyostelium discoideum (Social amoeba)).